Reading from the N-terminus, the 1515-residue chain is Glutamate synthase [NADPH] large chain (1515 aa).

The propeptide occupies methionine 1–alanine 36. The active-site For GATase activity is the cysteine 37. Residues cysteine 37–glutamine 432 form the Glutamine amidotransferase type-2 domain. The interval alanine 916–aspartate 937 is disordered. The span at aspartate 926–glycine 936 shows a compositional bias: basic and acidic residues. FMN is bound by residues leucine 1085–arginine 1142 and serine 1086–arginine 1142. [3Fe-4S] cluster is bound by residues cysteine 1138, cysteine 1144, and cysteine 1149.

This sequence belongs to the glutamate synthase family. Aggregate of 4 catalytic active heterodimers, consisting of a large and a small subunit. Requires [3Fe-4S] cluster as cofactor. It depends on FAD as a cofactor. FMN serves as cofactor.

It carries out the reaction 2 L-glutamate + NADP(+) = L-glutamine + 2-oxoglutarate + NADPH + H(+). It functions in the pathway amino-acid biosynthesis; L-glutamate biosynthesis via GLT pathway; L-glutamate from 2-oxoglutarate and L-glutamine (NADP(+) route): step 1/1. The protein operates within energy metabolism; nitrogen metabolism. The sequence is that of Glutamate synthase [NADPH] large chain (gltB) from Azospirillum brasilense.